The sequence spans 417 residues: Serine hydroxymethyltransferase (417 aa).

Residues leucine 121 and 125–127 contribute to the (6S)-5,6,7,8-tetrahydrofolate site; that span reads GHL. The residue at position 229 (lysine 229) is an N6-(pyridoxal phosphate)lysine. Position 355–357 (355–357) interacts with (6S)-5,6,7,8-tetrahydrofolate; sequence SPF.

Belongs to the SHMT family. Homodimer. Pyridoxal 5'-phosphate is required as a cofactor.

Its subcellular location is the cytoplasm. The enzyme catalyses (6R)-5,10-methylene-5,6,7,8-tetrahydrofolate + glycine + H2O = (6S)-5,6,7,8-tetrahydrofolate + L-serine. Its pathway is one-carbon metabolism; tetrahydrofolate interconversion. It participates in amino-acid biosynthesis; glycine biosynthesis; glycine from L-serine: step 1/1. Catalyzes the reversible interconversion of serine and glycine with tetrahydrofolate (THF) serving as the one-carbon carrier. This reaction serves as the major source of one-carbon groups required for the biosynthesis of purines, thymidylate, methionine, and other important biomolecules. Also exhibits THF-independent aldolase activity toward beta-hydroxyamino acids, producing glycine and aldehydes, via a retro-aldol mechanism. In Salmonella choleraesuis (strain SC-B67), this protein is Serine hydroxymethyltransferase.